The chain runs to 135 residues: Large ribosomal subunit protein uL22 (135 aa).

The protein belongs to the universal ribosomal protein uL22 family. As to quaternary structure, part of the 50S ribosomal subunit.

In terms of biological role, this protein binds specifically to 23S rRNA; its binding is stimulated by other ribosomal proteins, e.g. L4, L17, and L20. It is important during the early stages of 50S assembly. It makes multiple contacts with different domains of the 23S rRNA in the assembled 50S subunit and ribosome. The globular domain of the protein is located near the polypeptide exit tunnel on the outside of the subunit, while an extended beta-hairpin is found that lines the wall of the exit tunnel in the center of the 70S ribosome. This chain is Large ribosomal subunit protein uL22, found in Malacoplasma penetrans (strain HF-2) (Mycoplasma penetrans).